Consider the following 227-residue polypeptide: ATP-dependent dethiobiotin synthetase BioD (227 aa).

Position 13–18 (Asn-13–Val-18) interacts with ATP. Thr-17 is a Mg(2+) binding site. The active site involves Lys-38. ATP-binding positions include Asp-55 and Glu-116–Gly-119. Mg(2+) is bound by residues Asp-55 and Glu-116.

Belongs to the dethiobiotin synthetase family. As to quaternary structure, homodimer. Requires Mg(2+) as cofactor.

The protein localises to the cytoplasm. The catalysed reaction is (7R,8S)-7,8-diammoniononanoate + CO2 + ATP = (4R,5S)-dethiobiotin + ADP + phosphate + 3 H(+). Its pathway is cofactor biosynthesis; biotin biosynthesis; biotin from 7,8-diaminononanoate: step 1/2. Its function is as follows. Catalyzes a mechanistically unusual reaction, the ATP-dependent insertion of CO2 between the N7 and N8 nitrogen atoms of 7,8-diaminopelargonic acid (DAPA, also called 7,8-diammoniononanoate) to form a ureido ring. This is ATP-dependent dethiobiotin synthetase BioD from Buchnera aphidicola subsp. Baizongia pistaciae (strain Bp).